The chain runs to 238 residues: Lytic polysaccharide monooxygenase NCU01050 (238 aa).

The signal sequence occupies residues 1–15; it reads MKVLAPLVLASAASA. His16 provides a ligand contact to Cu(2+). Glu45 is an O2 binding site. Intrachain disulfides connect Cys54–Cys186 and Cys156–Cys238. Asn75 carries N-linked (GlcNAc...) asparagine glycosylation. His99 provides a ligand contact to Cu(2+). Positions 172 and 181 each coordinate O2. His172 (proton donor) is an active-site residue. Position 183 (Tyr183) interacts with Cu(2+).

It belongs to the polysaccharide monooxygenase AA9 family. In terms of assembly, monomer. Cu(2+) is required as a cofactor. N-linked glycans containing mannose and N-acetylglucosamine.

Its subcellular location is the secreted. The catalysed reaction is [(1-&gt;4)-beta-D-glucosyl]n+m + reduced acceptor + O2 = 4-dehydro-beta-D-glucosyl-[(1-&gt;4)-beta-D-glucosyl]n-1 + [(1-&gt;4)-beta-D-glucosyl]m + acceptor + H2O.. It participates in glycan metabolism; cellulose degradation. With respect to regulation, inhibited by increasing levels of ascorbic acid. In terms of biological role, catalyzes the oxidative cleavage of glycosidic bonds in cellulosic substrates via a copper-dependent mechanism. In the presence of an exogenous reductant ascorbic acid, degrades phosphoric acid swollen cellulose (PASC) to cello-oligosaccharides and 4-ketoaldoses, the end products oxidized at the non-reducing end. Somewhat active toward tamarind xyloglucan and konjac glucomannan, with improved activity with glucomannan in the presence of PASC. H(2)O(2) is able to substitute for O(2) in reactions with PASC, xyloglucan and glucomannan. Very weak activity on cellopentaose. No activity with birchwood xylan or ivory nut mannan. Disrupts plant cell wall polysaccharide substrates, such as recalcitrant crystalline cellulose. The chain is Lytic polysaccharide monooxygenase NCU01050 from Neurospora crassa (strain ATCC 24698 / 74-OR23-1A / CBS 708.71 / DSM 1257 / FGSC 987).